The following is a 289-amino-acid chain: MKHGIYYSYWEHEWSAKFGPYIEKVAKLGFDIIEVAAHHINEYSDAELATIRKSAKDNGIILTAGIGPSKTKNLSSEDAAVRAAGKAFFERTLSNVAKLDIHTIGGALHSYWPIDYSQPVDKAGDYARGVEGINGIADFANDLGINLCIEVLNRFENHVLNTAAEGVAFVKDVGKNNVKVMLDTFHMNIEEDSFGDAIRTAGPLLGHFHTGESNRRVPGKGRMPWHEIGLALRDINYTGAVIMEPFVKTGGTIGSDIKVWRDLSGGADIAKMDEDARNALAFSRFVLGG.

Y6 and A107 together coordinate substrate. E150 serves as the catalytic Proton donor/acceptor. Residue E150 participates in Mn(2+) binding. Substrate contacts are provided by residues E156 and 183 to 186; that span reads DTFH. Mn(2+)-binding residues include D183 and H209. A substrate-binding site is contributed by R215. E244 acts as the Proton donor/acceptor in catalysis. E244 provides a ligand contact to Mn(2+).

The protein belongs to the hyi family. Homotetramer. Requires Mn(2+) as cofactor. Co(2+) is required as a cofactor.

It catalyses the reaction D-allulose = keto-D-fructose. Inhibited by Zn(2+) and Cu(2+). In terms of biological role, involved in the biosynthesis of D-psicose. Catalyzes the reversible epimerization of D-fructose at the C3 position to yield D-psicose. The enzyme is highly specific for D-psicose and shows very low activity with D-tagatose. The substrate specificity decreases in the following order: D-fructose, D-tagatose, D-ribulose, D-xylulose, and D-sorbose. It shows a higher level of activity for cis ketoses than for trans-ketoses. This is D-psicose 3-epimerase (dpe) from Agrobacterium fabrum (strain C58 / ATCC 33970) (Agrobacterium tumefaciens (strain C58)).